Reading from the N-terminus, the 376-residue chain is E3 ubiquitin-protein ligase RNF133 (376 aa).

The region spanning 65–167 (SSTLKRVAGV…LKGTEIFHLI (103 aa)) is the PA domain. A helical membrane pass occupies residues 190–210 (YLVSFVIVTTATLAYFIFYHI). Residues 256 to 297 (CVICFEHYKPNDIVRILTCKHFFHKNCIDPWILSHGTCPICK) form an RING-type; atypical zinc finger. Positions 328-376 (TLSPSEEETNNEVSPAGTSDKVIHVEENPTSQNNDSQPHSVVEDVHPSP) are disordered. Positions 355-366 (NPTSQNNDSQPH) are enriched in polar residues.

As to quaternary structure, interacts with E3 ligase UBE2J1. Post-translationally, auto-ubiquitinated.

Its subcellular location is the endoplasmic reticulum membrane. It carries out the reaction S-ubiquitinyl-[E2 ubiquitin-conjugating enzyme]-L-cysteine + [acceptor protein]-L-lysine = [E2 ubiquitin-conjugating enzyme]-L-cysteine + N(6)-ubiquitinyl-[acceptor protein]-L-lysine.. It functions in the pathway protein modification; protein ubiquitination. Functionally, has E3 ubiquitin-protein ligase activity. Plays a role in male fecundity through the interaction with the E2 ubituitin-protein ligase UBE2J1. In Macaca fascicularis (Crab-eating macaque), this protein is E3 ubiquitin-protein ligase RNF133 (RNF133).